The following is a 729-amino-acid chain: Catalase-peroxidase (729 aa).

The segment at residues 95 to 218 is a cross-link (tryptophyl-tyrosyl-methioninium (Trp-Tyr) (with M-244)); sequence WHSAGTYRGA…LAAVEMGLVY (124 aa). Residue His-96 is the Proton acceptor of the active site. A cross-link (tryptophyl-tyrosyl-methioninium (Tyr-Met) (with W-95)) is located at residues 218–244; that stretch reads YVNPEGPHGHPDPVASGPDVRDTFARM. His-259 is a binding site for heme b.

This sequence belongs to the peroxidase family. Peroxidase/catalase subfamily. Homodimer or homotetramer. Heme b serves as cofactor. Formation of the three residue Trp-Tyr-Met cross-link is important for the catalase, but not the peroxidase activity of the enzyme.

The catalysed reaction is H2O2 + AH2 = A + 2 H2O. It catalyses the reaction 2 H2O2 = O2 + 2 H2O. Bifunctional enzyme with both catalase and broad-spectrum peroxidase activity. This Synechococcus sp. (strain CC9605) protein is Catalase-peroxidase.